We begin with the raw amino-acid sequence, 467 residues long: DNA repair protein RadA (467 aa).

The C4-type zinc-finger motif lies at 10–27 (CQNCGAVHSRWAGKCDSC). 98–105 (GDPGIGKS) serves as a coordination point for ATP. The RadA KNRFG motif signature appears at 260 to 264 (KNRFG). A lon-protease-like region spans residues 359–467 (DVYLNVAGGY…RIAASGAGKK (109 aa)).

Belongs to the RecA family. RadA subfamily.

Functionally, DNA-dependent ATPase involved in processing of recombination intermediates, plays a role in repairing DNA breaks. Stimulates the branch migration of RecA-mediated strand transfer reactions, allowing the 3' invading strand to extend heteroduplex DNA faster. Binds ssDNA in the presence of ADP but not other nucleotides, has ATPase activity that is stimulated by ssDNA and various branched DNA structures, but inhibited by SSB. Does not have RecA's homology-searching function. The protein is DNA repair protein RadA of Brucella abortus (strain 2308).